The chain runs to 110 residues: Protein RALF-like 4 (110 aa).

A signal peptide spans 1-23 (MGVKMLLIFGLLILAMVAKSVNA). The propeptide at 24-58 (TYPLTKSCINGQGCIGEDDELESLMDSETNRRQLA) is removed in mature form. 2 disulfides stabilise this stretch: Cys76–Cys86 and Cys99–Cys105.

The protein belongs to the plant rapid alkalinization factor (RALF) family. Proteolytically cleaved, probably by S1P, a subtilisin-like serine protease (subtilase).

It is found in the secreted. Cell signaling peptide that may regulate plant stress, growth, and development. Mediates a rapid alkalinization of extracellular space by mediating a transient increase in the cytoplasmic Ca(2+) concentration leading to a calcium-dependent signaling events through a cell surface receptor and a concomitant activation of some intracellular mitogen-activated protein kinases. The sequence is that of Protein RALF-like 4 (RALFL4) from Arabidopsis thaliana (Mouse-ear cress).